A 185-amino-acid polypeptide reads, in one-letter code: C-phycoerythrin beta chain (185 aa).

(2R,3E)-phycoerythrobilin-binding residues include C49 and C60. Residue N71 is modified to N4-methylasparagine. The (2R,3E)-phycoerythrobilin site is built by C81 and C166.

The protein belongs to the phycobiliprotein family. Heterodimer of an alpha and a beta chain. Contains three covalently linked bilin chromophores.

The protein resides in the cellular thylakoid membrane. In terms of biological role, light-harvesting photosynthetic bile pigment-protein from the phycobiliprotein complex. In Pseudanabaena tenuis (strain PCC 7409), this protein is C-phycoerythrin beta chain (cpeB).